The chain runs to 107 residues: CRISPR-associated endoribonuclease Cas2 (107 aa).

D6 serves as a coordination point for Mg(2+).

Belongs to the CRISPR-associated endoribonuclease Cas2 protein family. As to quaternary structure, homodimer, forms a heterotetramer with a Cas1 homodimer. Mg(2+) serves as cofactor.

CRISPR (clustered regularly interspaced short palindromic repeat), is an adaptive immune system that provides protection against mobile genetic elements (viruses, transposable elements and conjugative plasmids). CRISPR clusters contain sequences complementary to antecedent mobile elements and target invading nucleic acids. CRISPR clusters are transcribed and processed into CRISPR RNA (crRNA). Functions as a ssRNA-specific endoribonuclease. Involved in the integration of spacer DNA into the CRISPR cassette. This chain is CRISPR-associated endoribonuclease Cas2, found in Streptococcus mutans serotype c (strain NN2025).